A 465-amino-acid polypeptide reads, in one-letter code: Neuraminidase (465 aa).

The Intravirion segment spans residues 1 to 11; it reads MLPSTIQTLTL. Residues 12-34 traverse the membrane as a helical segment; the sequence is FLTSGGVLLSLYVSASLSYLLYS. Residues 13 to 35 form an involved in apical transport and lipid raft association region; sequence LTSGGVLLSLYVSASLSYLLYSD. The Virion surface segment spans residues 35-465; the sequence is DILLRFSSKI…DTVTGVDMAL (431 aa). A hypervariable stalk region region spans residues 38 to 85; sequence LRFSSKITAPTMTLDCANASNVQAVNRSATKEMTFLLPEPEWTYPRLS. Asparagine 55 and asparagine 63 each carry an N-linked (GlcNAc...) asparagine; by host glycan. 8 disulfides stabilise this stretch: cysteine 86-cysteine 419, cysteine 121-cysteine 126, cysteine 181-cysteine 228, cysteine 230-cysteine 235, cysteine 276-cysteine 290, cysteine 278-cysteine 288, cysteine 317-cysteine 336, and cysteine 423-cysteine 446. Positions 88-465 are head of neuraminidase; sequence GSTFQKALLI…DTVTGVDMAL (378 aa). Substrate is bound at residue arginine 115. N-linked (GlcNAc...) asparagine; by host glycosylation occurs at asparagine 143. The active-site Proton donor/acceptor is aspartate 148. Substrate is bound at residue arginine 149. A substrate-binding site is contributed by 274 to 275; sequence EE. N-linked (GlcNAc...) asparagine; by host glycosylation is present at asparagine 283. A substrate-binding site is contributed by arginine 291. 2 residues coordinate Ca(2+): aspartate 292 and aspartate 323. Residues 328 to 347 are disordered; that stretch reads DDGSITGPCESDGDKGRGGI. Substrate is bound at residue arginine 373. The active-site Nucleophile is the tyrosine 408.

This sequence belongs to the glycosyl hydrolase 34 family. Homotetramer. Ca(2+) is required as a cofactor. Post-translationally, N-glycosylated.

The protein localises to the virion membrane. It is found in the host apical cell membrane. The catalysed reaction is Hydrolysis of alpha-(2-&gt;3)-, alpha-(2-&gt;6)-, alpha-(2-&gt;8)- glycosidic linkages of terminal sialic acid residues in oligosaccharides, glycoproteins, glycolipids, colominic acid and synthetic substrates.. Inhibited by the neuraminidase inhibitors zanamivir (Relenza) and oseltamivir (Tamiflu). These drugs interfere with the release of progeny virus from infected cells and are effective against all influenza strains. Resistance to neuraminidase inhibitors is quite rare. Functionally, catalyzes the removal of terminal sialic acid residues from viral and cellular glycoconjugates. Cleaves off the terminal sialic acids on the glycosylated HA during virus budding to facilitate virus release. Additionally helps virus spread through the circulation by further removing sialic acids from the cell surface. These cleavages prevent self-aggregation and ensure the efficient spread of the progeny virus from cell to cell. Otherwise, infection would be limited to one round of replication. Described as a receptor-destroying enzyme because it cleaves a terminal sialic acid from the cellular receptors. May facilitate viral invasion of the upper airways by cleaving the sialic acid moieties on the mucin of the airway epithelial cells. Likely to plays a role in the budding process through its association with lipid rafts during intracellular transport. May additionally display a raft-association independent effect on budding. Plays a role in the determination of host range restriction on replication and virulence. Sialidase activity in late endosome/lysosome traffic seems to enhance virus replication. The sequence is that of Neuraminidase from Influenza B virus (strain B/Memphis/3/1989).